The chain runs to 85 residues: Large ribosomal subunit protein bL27 (85 aa).

Positions 1 to 20 (MATKKAGGSTRNGRDSEAKR) are disordered.

This sequence belongs to the bacterial ribosomal protein bL27 family.

The chain is Large ribosomal subunit protein bL27 from Haemophilus influenzae (strain ATCC 51907 / DSM 11121 / KW20 / Rd).